A 224-amino-acid polypeptide reads, in one-letter code: Ribonuclease 3 (224 aa).

The RNase III domain occupies 4–126; it reads LDRLQHKIGY…IIGAMSLDSN (123 aa). Position 39 (Glu39) interacts with Mg(2+). Residue Asp43 is part of the active site. Mg(2+)-binding residues include Asp112 and Glu115. Glu115 is a catalytic residue. Positions 153–223 constitute a DRBM domain; it reads DPKTRLQEYL…AEQILKVLDI (71 aa).

This sequence belongs to the ribonuclease III family. In terms of assembly, homodimer. Requires Mg(2+) as cofactor.

Its subcellular location is the cytoplasm. The enzyme catalyses Endonucleolytic cleavage to 5'-phosphomonoester.. In terms of biological role, digests double-stranded RNA. Involved in the processing of primary rRNA transcript to yield the immediate precursors to the large and small rRNAs (23S and 16S). Processes some mRNAs, and tRNAs when they are encoded in the rRNA operon. Processes pre-crRNA and tracrRNA of type II CRISPR loci if present in the organism. This chain is Ribonuclease 3, found in Actinobacillus succinogenes (strain ATCC 55618 / DSM 22257 / CCUG 43843 / 130Z).